Here is a 202-residue protein sequence, read N- to C-terminus: Histone chaperone ASF1B (202 aa).

The segment at 1–156 (MAKVSVLNVA…TRFHINWDNN (156 aa)) is interaction with histone H3 and CHAF1B. Phosphoserine; by TLK2 is present on serine 198.

It belongs to the ASF1 family. As to quaternary structure, interacts with histone H3 (via C-terminus), including histone H3.1, H3.2 and H3.3, and histone H4; the interaction with H3 is direct. Interacts with the CHAF1A, CHAF1B and RBBP4 subunits of the CAF-1 complex. Interacts with HAT1, NASP and TAF1. Found in a soluble complex with NASP and histones H3 and H4; the interaction with NASP is probably indirect and mediated by H3-H4. Interacts with CDAN1. Found in a cytosolic complex with CDAN1, ASF1A, IPO4 and histones H3.1 and H4. Interacts with CREBBP. Phosphorylated by TLK2. Phosphorylated by TLK1. As to expression, highly expressed in germ cells. Restricted to premeiotic to meiotic stages during spermatogenesis.

It localises to the nucleus. The protein resides in the cytoplasm. It is found in the cytosol. Functionally, histone chaperone that facilitates histone deposition and histone exchange and removal during nucleosome assembly and disassembly. Cooperates with chromatin assembly factor 1 (CAF-1) to promote replication-dependent chromatin assembly. Also involved in the nuclear import of the histone H3-H4 dimer together with importin-4 (IPO4): specifically recognizes and binds newly synthesized histones with the monomethylation of H3 'Lys-9' (H3K9me1) and diacetylation at 'Lys-5' and 'Lys-12' of H4 (H4K5ac and H4K12ac) marks in the cytosol. Does not participate in replication-independent nucleosome deposition which is mediated by ASF1A and HIRA. Required for gonad development. The protein is Histone chaperone ASF1B of Mus musculus (Mouse).